The sequence spans 540 residues: BTB/POZ domain-containing protein 6-A (540 aa).

Residues 138–208 (ADVHFIVGPP…MYSDEIELAP (71 aa)) enclose the BTB domain.

Interacts with cul3. Interacts (via BTB domain) with zbtb16/plzf. As to expression, expressed in the developing central nervous system.

Its subcellular location is the cytoplasm. The protein localises to the nucleus. In terms of biological role, adapter protein for the cul3 E3 ubiquitin-protein ligase complex. Promotes the export of zbtb16/plzf from the nucleus to the cytoplasm and targets zbtb16/plzf for ubiquitination and degradation. Up-regulates neurog1 expression and antagonizes zbtb16/plzf, to promote neurogenesis. The chain is BTB/POZ domain-containing protein 6-A (btbd6a) from Danio rerio (Zebrafish).